The primary structure comprises 253 residues: Small ribosomal subunit protein uS2 (253 aa).

The tract at residues 226 to 253 (QGADNADVEKELSESVEENSAEEVDDAE) is disordered. Acidic residues predominate over residues 239-253 (ESVEENSAEEVDDAE).

This sequence belongs to the universal ribosomal protein uS2 family.

The sequence is that of Small ribosomal subunit protein uS2 from Lactobacillus delbrueckii subsp. bulgaricus (strain ATCC 11842 / DSM 20081 / BCRC 10696 / JCM 1002 / NBRC 13953 / NCIMB 11778 / NCTC 12712 / WDCM 00102 / Lb 14).